A 252-amino-acid chain; its full sequence is Methionine aminopeptidase (252 aa).

Histidine 76 contributes to the substrate binding site. Residues aspartate 93, aspartate 104, and histidine 168 each contribute to the a divalent metal cation site. Histidine 175 provides a ligand contact to substrate. Residues glutamate 202 and glutamate 233 each contribute to the a divalent metal cation site.

It belongs to the peptidase M24A family. Methionine aminopeptidase type 1 subfamily. Monomer. It depends on Co(2+) as a cofactor. Zn(2+) is required as a cofactor. Mn(2+) serves as cofactor. The cofactor is Fe(2+).

It carries out the reaction Release of N-terminal amino acids, preferentially methionine, from peptides and arylamides.. Functionally, removes the N-terminal methionine from nascent proteins. The N-terminal methionine is often cleaved when the second residue in the primary sequence is small and uncharged (Met-Ala-, Cys, Gly, Pro, Ser, Thr, or Val). Requires deformylation of the N(alpha)-formylated initiator methionine before it can be hydrolyzed. The sequence is that of Methionine aminopeptidase from Staphylococcus aureus (strain MRSA252).